Consider the following 238-residue polypeptide: Glutamine amidotransferase-like protein chyE (238 aa).

Residues 8–238 form the Glutamine amidotransferase type-1 domain; sequence KIAVLINTPP…LERVLQWLSE (231 aa). Catalysis depends on Cys102, which acts as the Nucleophile. Active-site residues include His189 and Glu191.

It belongs to the peptidase C26 family.

It functions in the pathway pigment biosynthesis. In terms of biological role, glutamine amidotransferase-like protein; part of the gene cluster that mediates the biosynthesis of the yellow pigment chrysogine. the NRPS chyA mediates the condensation of anthranilic acid and alanine into the intermediate 2-(2-aminopropanamido)benzoic acid. The remainder of the pathway is highly branched yielding at least 13 chrysogine-related compounds. The malonyl transferase chyE converts 2-(2-aminopropanamido)benzoic acid and 2-(2-aminopropanamido)benzamidine into 2-(2-(2-carboxyacetamido)propanamido)benzoic acid and 3-((1-((2-carbamoylphenyl)amino)-1-oxopropan-2-yl)amino)-3-oxopropanoic acid, respectively. ChyD is an amidase, being responsible for the amidation of the carboxylic acid moiety of 2-(2-aminopropanamido)benzoic acid, 2-(2-(2-carboxyacetamido)propanamido)benzoic acid and 2-(2-((4-amino-1-carboxy-4-oxobutyl)amino)propanamido)benzoic acid. ChyC is involved in the same reactions as ChyD, but plays a more minor role in the amidation reactions compared to chyD. The oxidoreductases chyH and chyM are involved in oxidation reactions that form N-pyruvoylanthranilamide from 2-(2-aminopropanamido)benzamidine and (1-((2-carbamoylphenyl)amino)-1-oxopropan-2-yl)glutamine, respectively. N-pyruvoylanthranilamide is further converted via two further branches in the pathway, yielding chrysogine and additional chrysogine-related coumpounds. Chrysogine is likely formed by a spontaneous ring closure from N-pyruvoylanthranilamide. The protein is Glutamine amidotransferase-like protein chyE of Penicillium rubens (strain ATCC 28089 / DSM 1075 / NRRL 1951 / Wisconsin 54-1255) (Penicillium chrysogenum).